Here is a 339-residue protein sequence, read N- to C-terminus: DNA-directed RNA polymerase subunit alpha (339 aa).

The segment at 1-233 (MVREEVAGST…DLFLPFLHAE (233 aa)) is alpha N-terminal domain (alpha-NTD). The tract at residues 264-339 (KKGIPLNCIF…IDLLKNKLSF (76 aa)) is alpha C-terminal domain (alpha-CTD).

This sequence belongs to the RNA polymerase alpha chain family. In plastids the minimal PEP RNA polymerase catalytic core is composed of four subunits: alpha, beta, beta', and beta''. When a (nuclear-encoded) sigma factor is associated with the core the holoenzyme is formed, which can initiate transcription.

The protein localises to the plastid. It localises to the chloroplast. The catalysed reaction is RNA(n) + a ribonucleoside 5'-triphosphate = RNA(n+1) + diphosphate. In terms of biological role, DNA-dependent RNA polymerase catalyzes the transcription of DNA into RNA using the four ribonucleoside triphosphates as substrates. This Secale strictum (Mountain rye) protein is DNA-directed RNA polymerase subunit alpha.